Consider the following 500-residue polypeptide: Autophagy-related protein 18 (500 aa).

The stretch at 3 to 41 (DSSPTINFINFNQTGTCISLGTSKGFKIFNCEPFGKFYS) is one WD 1 repeat. Positions 174–197 (VGGNTETSFKRDQQDAGHSDISDL) are disordered. Basic and acidic residues predominate over residues 181 to 194 (SFKRDQQDAGHSDI). 2 WD repeats span residues 243 to 283 (AHKG…KIYQ) and 288 to 327 (TYAT…SNNK). The L/FRRG motif signature appears at 284 to 288 (FRRGT). The segment at 328-358 (LDSDDSNMEEAAADDSSLDTTSIDALSDEEN) is disordered. Positions 331–344 (DDSNMEEAAADDSS) are enriched in acidic residues. A Phosphoserine modification is found at Ser354.

Belongs to the WD repeat PROPPIN family. As to quaternary structure, component of the PI(3,5)P2 regulatory complex, composed of ATG18, FIG4, FAB1, VAC14 and VAC7. VAC14 nucleates the assembly of the complex and serves as a scaffold. Interacts with ATG2, ATG9 and VAC17. The ATG2-ATG18 complex is essential for autophagosome formation.

It is found in the preautophagosomal structure membrane. The protein resides in the vacuole membrane. The protein localises to the endosome membrane. Functionally, the PI(3,5)P2 regulatory complex regulates both the synthesis and turnover of phosphatidylinositol 3,5-bisphosphate (PtdIns(3,5)P2). May negatively regulate FAB1 activity by sequestering or masking VAC7 from FAB1. Necessary for proper vacuole morphology. Plays an important role in osmotically-induced vacuole fragmentation. Required for cytoplasm to vacuole transport (Cvt) vesicle formation, pexophagy and starvation-induced autophagy. Involved in correct ATG9 trafficking to the pre-autophagosomal structure. Might also be involved in premeiotic DNA replication. With ATG2, protects ATG8 from ARG4-mediated cleavage. This Saccharomyces cerevisiae (strain YJM789) (Baker's yeast) protein is Autophagy-related protein 18 (ATG18).